Here is a 518-residue protein sequence, read N- to C-terminus: NADH-quinone oxidoreductase subunit N (518 aa).

14 helical membrane passes run 18–38 (FRPE…DLVF), 45–65 (VALL…LLAI), 82–102 (AFAI…VIIA), 113–133 (IGQF…MASA), 136–156 (LLMV…LAGF), 171–191 (VIYG…LYGL), 220–240 (VALV…VAAV), 254–274 (PTPF…ALAI), 295–315 (LAGI…MTLG), 328–348 (LLAY…SAVS), 355–375 (VMIY…VVIL), 399–419 (AVAF…AGFV), 439–459 (WYAW…YYYV), and 486–506 (VMLG…TPMV).

This sequence belongs to the complex I subunit 2 family. NDH-1 is composed of 14 different subunits. Subunits NuoA, H, J, K, L, M, N constitute the membrane sector of the complex.

It localises to the cell inner membrane. It catalyses the reaction a quinone + NADH + 5 H(+)(in) = a quinol + NAD(+) + 4 H(+)(out). In terms of biological role, NDH-1 shuttles electrons from NADH, via FMN and iron-sulfur (Fe-S) centers, to quinones in the respiratory chain. The immediate electron acceptor for the enzyme in this species is believed to be ubiquinone. Couples the redox reaction to proton translocation (for every two electrons transferred, four hydrogen ions are translocated across the cytoplasmic membrane), and thus conserves the redox energy in a proton gradient. This is NADH-quinone oxidoreductase subunit N from Anaeromyxobacter sp. (strain Fw109-5).